The chain runs to 192 residues: Cytidylate kinase (192 aa).

12–20 is an ATP binding site; that stretch reads GLAGSGTTT.

It belongs to the cytidylate kinase family. Type 2 subfamily.

The protein resides in the cytoplasm. It carries out the reaction CMP + ATP = CDP + ADP. It catalyses the reaction dCMP + ATP = dCDP + ADP. The protein is Cytidylate kinase of Pyrococcus furiosus (strain ATCC 43587 / DSM 3638 / JCM 8422 / Vc1).